Here is a 299-residue protein sequence, read N- to C-terminus: MAGVLRLAGAARSPLARALAPAARRMGASAAAAMEDEAYWTEWEEEEEKARARESAPVAEMCPTGGGGGGPQWVVMGRPGPQKHAHAARLAEVLAVPYISMGTLVRQELSPASSLYKKIANSVNEGKLVPEDIIFGLLTKRLEEGYNKGETGFILDGIPRTHMQAEILDEIVDIDLVLNFKCADNCFMKRRFGGDICPHCGQLFDFSKTASSDRNPSLGSCTWPSQVQHAAVLGLEDSRMEKMRAYAEQTKLLEDYYRKQRKLMELKTSARPGETWQGLVAALHLQHLDASPTPHKLTM.

Residues 1–25 (MAGVLRLAGAARSPLARALAPAARR) constitute a mitochondrion transit peptide. Residue 80–85 (GPQKHA) participates in ATP binding. Residues 100–129 (SMGTLVRQELSPASSLYKKIANSVNEGKLV) form an NMP region. AMP-binding positions include arginine 106, 127 to 129 (KLV), 157 to 160 (GIPR), and glutamine 164. ATP-binding positions include arginine 190 and 203–204 (LF). The segment at 193 to 237 (GGDICPHCGQLFDFSKTASSDRNPSLGSCTWPSQVQHAAVLGLED) is LID.

Belongs to the adenylate kinase family.

It localises to the mitochondrion. It catalyses the reaction AMP + ATP = 2 ADP. In terms of biological role, catalyzes the reversible transfer of the terminal phosphate group between ATP and AMP. Plays an important role in cellular energy homeostasis and in adenine nucleotide metabolism. This Oryza sativa subsp. japonica (Rice) protein is Probable adenylate kinase 7, mitochondrial.